Here is a 187-residue protein sequence, read N- to C-terminus: ATP synthase subunit b (187 aa).

A helical transmembrane segment spans residues N32–G52.

It belongs to the ATPase B chain family. F-type ATPases have 2 components, F(1) - the catalytic core - and F(0) - the membrane proton channel. F(1) has five subunits: alpha(3), beta(3), gamma(1), delta(1), epsilon(1). F(0) has four main subunits: a(1), b(1), b'(1) and c(10-14). The alpha and beta chains form an alternating ring which encloses part of the gamma chain. F(1) is attached to F(0) by a central stalk formed by the gamma and epsilon chains, while a peripheral stalk is formed by the delta, b and b' chains.

Its subcellular location is the cellular thylakoid membrane. Functionally, f(1)F(0) ATP synthase produces ATP from ADP in the presence of a proton or sodium gradient. F-type ATPases consist of two structural domains, F(1) containing the extramembraneous catalytic core and F(0) containing the membrane proton channel, linked together by a central stalk and a peripheral stalk. During catalysis, ATP synthesis in the catalytic domain of F(1) is coupled via a rotary mechanism of the central stalk subunits to proton translocation. Its function is as follows. Component of the F(0) channel, it forms part of the peripheral stalk, linking F(1) to F(0). The sequence is that of ATP synthase subunit b from Trichormus variabilis (strain ATCC 29413 / PCC 7937) (Anabaena variabilis).